Reading from the N-terminus, the 353-residue chain is Polyadenylate-binding protein-interacting protein 10 (353 aa).

A disordered region spans residues 1-61; sequence MAVAENAGVK…IDSTPETDDR (61 aa). Residues 20–31 are compositionally biased toward low complexity; that stretch reads NNNTAASATETT. A PAM2-like motif is present at residues 96–106; sequence KLNPMAQEFVP. The segment at 128–159 is disordered; that stretch reads AAPPKLADGNDHFPRRRRSFGQGKRRMNKRTS. Over residues 141–156 the composition is skewed to basic residues; the sequence is PRRRRSFGQGKRRMNK. The Bipartite nuclear localization signal signature appears at 142 to 153; that stretch reads RRRRSFGQGKRR. 2 consecutive RRM domains span residues 169-244 and 266-341; these read RTVY…PSKT.

In terms of tissue distribution, expressed in cauline leaves, stems, rosette leaves, immature siliques and primary inflorescences.

Its subcellular location is the nucleus. In Arabidopsis thaliana (Mouse-ear cress), this protein is Polyadenylate-binding protein-interacting protein 10 (CID10).